The chain runs to 1085 residues: Translation factor GUF1 homolog, mitochondrial (1085 aa).

In terms of domain architecture, tr-type G spans 232–409 (KYIRNFCILA…RIISDIPPPI (178 aa)). GTP-binding positions include 241 to 248 (AHIDSGKS), 302 to 306 (DTPGH), and 356 to 359 (NKID).

The protein belongs to the TRAFAC class translation factor GTPase superfamily. Classic translation factor GTPase family. LepA subfamily.

The protein localises to the mitochondrion inner membrane. The enzyme catalyses GTP + H2O = GDP + phosphate + H(+). Functionally, promotes mitochondrial protein synthesis. May act as a fidelity factor of the translation reaction, by catalyzing a one-codon backward translocation of tRNAs on improperly translocated ribosomes. Binds to mitochondrial ribosomes in a GTP-dependent manner. In Plasmodium falciparum (isolate 3D7), this protein is Translation factor GUF1 homolog, mitochondrial.